The sequence spans 760 residues: Semaphorin-4A (760 aa).

Positions 1 to 32 (MALPSLGQDSWSLLRVFFFQLFLLPSLPPASG) are cleaved as a signal peptide. At 33 to 682 (TGGQGPMPRV…MAAQRSYWPH (650 aa)) the chain is on the extracellular side. The region spanning 36–494 (QGPMPRVKYH…FSGGIWRVPR (459 aa)) is the Sema domain. Cysteines 113 and 124 form a disulfide. Asn-120 and Asn-135 each carry an N-linked (GlcNAc...) asparagine glycan. Intrachain disulfides connect Cys-142–Cys-151, Cys-269–Cys-379, and Cys-293–Cys-339. Asn-496 is a glycosylation site (N-linked (GlcNAc...) asparagine). In terms of domain architecture, PSI spans 496-547 (NCSVYESCVDCVLARDPHCAWDPESRLCSLLSGSTKPWKQDMERGNPEWVCT). 3 cysteine pairs are disulfide-bonded: Cys-497-Cys-514, Cys-506-Cys-523, and Cys-579-Cys-623. The 59-residue stretch at 572-630 (NSILELPCPHLSALASYHWSHGRAKISEASATVYNGSLLLLPQDGVGGLYQCVATENGY) folds into the Ig-like C2-type domain. N-linked (GlcNAc...) asparagine glycosylation occurs at Asn-606. Residues 683–703 (FLIVTVLLAIVLLGVLTLLLA) form a helical membrane-spanning segment. Over 704-760 (SPLGALRARGKVQGCGMLPPREKAPLSRDQHLQPSKDHRTSASDVDADNNHLGAEVA) the chain is Cytoplasmic. The disordered stretch occupies residues 720-760 (MLPPREKAPLSRDQHLQPSKDHRTSASDVDADNNHLGAEVA). Positions 723 to 744 (PREKAPLSRDQHLQPSKDHRTS) are enriched in basic and acidic residues.

The protein belongs to the semaphorin family. Interacts with PLXNB1, PLXNB2 and PLXNB3. Interacts with PLXND1. Interacts with TIMD2. Expressed in neurons and glia in the developing hippocampus.

The protein resides in the cell membrane. In terms of biological role, cell surface receptor for PLXNB1, PLXNB2, PLXNB3 and PLXND1 that plays an important role in cell-cell signaling. Regulates glutamatergic and GABAergic synapse development. Promotes the development of inhibitory synapses in a PLXNB1-dependent manner and promotes the development of excitatory synapses in a PLXNB2-dependent manner. Plays a role in priming antigen-specific T-cells, promotes differentiation of Th1 T-helper cells, and thereby contributes to adaptive immunity. Promotes phosphorylation of TIMD2. Inhibits angiogenesis. Promotes axon growth cone collapse. Inhibits axonal extension by providing local signals to specify territories inaccessible for growing axons. This chain is Semaphorin-4A (Sema4a), found in Mus musculus (Mouse).